We begin with the raw amino-acid sequence, 157 residues long: Protein GrpE (157 aa).

The segment covering 1-10 (MQEENQHPEQ) has biased composition (basic and acidic residues). The segment at 1–21 (MQEENQHPEQDDISEAQDAGA) is disordered.

This sequence belongs to the GrpE family. Homodimer.

It is found in the cytoplasm. Participates actively in the response to hyperosmotic and heat shock by preventing the aggregation of stress-denatured proteins, in association with DnaK and GrpE. It is the nucleotide exchange factor for DnaK and may function as a thermosensor. Unfolded proteins bind initially to DnaJ; upon interaction with the DnaJ-bound protein, DnaK hydrolyzes its bound ATP, resulting in the formation of a stable complex. GrpE releases ADP from DnaK; ATP binding to DnaK triggers the release of the substrate protein, thus completing the reaction cycle. Several rounds of ATP-dependent interactions between DnaJ, DnaK and GrpE are required for fully efficient folding. In Methylovorus sp. (strain SS1 / DSM 11726), this protein is Protein GrpE.